We begin with the raw amino-acid sequence, 428 residues long: Histidinol dehydrogenase homolog (428 aa).

Positions 250 and 253 each coordinate Zn(2+). Active-site proton acceptor residues include Glu-320 and His-321. Positions 354 and 413 each coordinate Zn(2+).

Belongs to the histidinol dehydrogenase family. Zn(2+) serves as cofactor.

In Pelagibacter ubique (strain HTCC1062), this protein is Histidinol dehydrogenase homolog.